The sequence spans 502 residues: Glycerol kinase (502 aa).

T14 contacts ADP. ATP is bound by residues T14, T15, and S16. T14 contributes to the sn-glycerol 3-phosphate binding site. R18 contacts ADP. Residues R84, E85, Y136, and D246 each contribute to the sn-glycerol 3-phosphate site. Residues R84, E85, Y136, D246, and Q247 each contribute to the glycerol site. Positions 268 and 311 each coordinate ADP. Positions 268, 311, 315, and 412 each coordinate ATP. The ADP site is built by G412 and N416.

Belongs to the FGGY kinase family. Homotetramer and homodimer (in equilibrium). Heterodimer with EIIA-Glc. Binds 1 zinc ion per glycerol kinase EIIA-Glc dimer. The zinc ion is important for dimerization.

It carries out the reaction glycerol + ATP = sn-glycerol 3-phosphate + ADP + H(+). It functions in the pathway polyol metabolism; glycerol degradation via glycerol kinase pathway; sn-glycerol 3-phosphate from glycerol: step 1/1. Its activity is regulated as follows. Activity of this regulatory enzyme is affected by several metabolites. Allosterically and non-competitively inhibited by fructose 1,6-bisphosphate (FBP) and unphosphorylated phosphocarrier protein EIIA-Glc (III-Glc), an integral component of the bacterial phosphotransferase (PTS) system. Its function is as follows. Key enzyme in the regulation of glycerol uptake and metabolism. Catalyzes the phosphorylation of glycerol to yield sn-glycerol 3-phosphate. This chain is Glycerol kinase, found in Salmonella typhimurium (strain LT2 / SGSC1412 / ATCC 700720).